The following is a 102-amino-acid chain: NADH-quinone oxidoreductase subunit K (102 aa).

3 helical membrane passes run 6 to 26 (LEHGLIVATILFALGFYGVMV), 30 to 50 (LLFMLMSLEIMMNAAALAFVL), and 62 to 82 (VMFILILTLAAAEACIGLAIV).

It belongs to the complex I subunit 4L family. In terms of assembly, NDH-1 is composed of 14 different subunits. Subunits NuoA, H, J, K, L, M, N constitute the membrane sector of the complex.

Its subcellular location is the cell inner membrane. It catalyses the reaction a quinone + NADH + 5 H(+)(in) = a quinol + NAD(+) + 4 H(+)(out). Its function is as follows. NDH-1 shuttles electrons from NADH, via FMN and iron-sulfur (Fe-S) centers, to quinones in the respiratory chain. The immediate electron acceptor for the enzyme in this species is believed to be ubiquinone. Couples the redox reaction to proton translocation (for every two electrons transferred, four hydrogen ions are translocated across the cytoplasmic membrane), and thus conserves the redox energy in a proton gradient. This is NADH-quinone oxidoreductase subunit K from Acinetobacter baumannii (strain AB307-0294).